A 256-amino-acid polypeptide reads, in one-letter code: Triosephosphate isomerase (256 aa).

Residue 9-11 participates in substrate binding; sequence NWK. His-97 serves as the catalytic Electrophile. Catalysis depends on Glu-169, which acts as the Proton acceptor. Residues Gly-175, Ser-214, and 235–236 each bind substrate; that span reads GG.

The protein belongs to the triosephosphate isomerase family. In terms of assembly, homodimer.

It is found in the cytoplasm. The enzyme catalyses D-glyceraldehyde 3-phosphate = dihydroxyacetone phosphate. It participates in carbohydrate biosynthesis; gluconeogenesis. It functions in the pathway carbohydrate degradation; glycolysis; D-glyceraldehyde 3-phosphate from glycerone phosphate: step 1/1. Its function is as follows. Involved in the gluconeogenesis. Catalyzes stereospecifically the conversion of dihydroxyacetone phosphate (DHAP) to D-glyceraldehyde-3-phosphate (G3P). This is Triosephosphate isomerase from Aliivibrio fischeri (strain ATCC 700601 / ES114) (Vibrio fischeri).